Consider the following 377-residue polypeptide: Probable G-protein coupled receptor 27 (377 aa).

The Extracellular portion of the chain corresponds to 1 to 24; sequence MANASEPGGGGGGAEAAALGLRLA. N-linked (GlcNAc...) asparagine glycosylation is present at Asn-3. Residues 25–45 form a helical membrane-spanning segment; sequence TLSLLLCVSLAGNVLFALLIV. The Cytoplasmic portion of the chain corresponds to 46 to 56; that stretch reads RERSLHRAPYY. Residues 57 to 77 traverse the membrane as a helical segment; sequence LLLDLCLADGLRALACLPAVM. Residues 78–98 are Extracellular-facing; that stretch reads LAARRAAAAAGTPPGALGCKL. Cys-96 and Cys-173 are joined by a disulfide. Residues 99-119 traverse the membrane as a helical segment; it reads LAFLAALFCFHAAFLLLGVGV. Residues 120 to 140 are Cytoplasmic-facing; sequence TRYLAIAHHRFYAERLAGWPC. The helical transmembrane segment at 141–161 threads the bilayer; that stretch reads AAMLVCAAWALALAAAFPPVL. The Extracellular segment spans residues 162-183; it reads DGGGADDEDAPCALEQRPDGAP. A helical membrane pass occupies residues 184 to 204; sequence GALGFLLLLAAVVGATHLVYL. At 205 to 287 the chain is on the cytoplasmic side; it reads RLLFFIHDRR…FKTEKRLCKM (83 aa). A helical membrane pass occupies residues 288-308; sequence FYAITLLFLLLWGPYVVASYL. The Extracellular portion of the chain corresponds to 309 to 322; the sequence is RVLVRPGAVPQAYL. A helical transmembrane segment spans residues 323–343; sequence TASVWLTFAQAGINPVVCFLF. The Cytoplasmic portion of the chain corresponds to 344-377; the sequence is NRELRDCFRAQFPCCQSPQATQATLPCDLKGIGL.

The protein belongs to the G-protein coupled receptor 1 family. Expressed as a 3.0 kb transcript, in whole brain, hippocampus, striatum, frontal cortex, thalamus, pons and hypothalamus. A lower molecular weight transcript was detected in all regions examined, except the hypothalamus.

Its subcellular location is the cell membrane. Its function is as follows. Orphan receptor. Possible candidate for amine-like G-protein coupled receptor. This is Probable G-protein coupled receptor 27 (Gpr27) from Rattus norvegicus (Rat).